Consider the following 228-residue polypeptide: Isoprenyl transferase (228 aa).

Asp-15 is a catalytic residue. Asp-15 provides a ligand contact to Mg(2+). Substrate contacts are provided by residues 16–19 (GNGR), Trp-20, Arg-28, His-32, and 60–62 (STE). The Proton acceptor role is filled by Asn-63. Substrate is bound by residues Trp-64, Arg-66, Arg-176, and 182-184 (RLS). Residue Glu-195 participates in Mg(2+) binding.

Belongs to the UPP synthase family. In terms of assembly, homodimer. Requires Mg(2+) as cofactor.

In terms of biological role, catalyzes the condensation of isopentenyl diphosphate (IPP) with allylic pyrophosphates generating different type of terpenoids. This is Isoprenyl transferase from Wolinella succinogenes (strain ATCC 29543 / DSM 1740 / CCUG 13145 / JCM 31913 / LMG 7466 / NCTC 11488 / FDC 602W) (Vibrio succinogenes).